We begin with the raw amino-acid sequence, 567 residues long: Oxygen-dependent choline dehydrogenase (567 aa).

6–35 (DYIIVGAGSAGNTLATRLTEDEGVTVLLLE) provides a ligand contact to FAD. The interval 182–203 (QQEGFGPMDRTVTPKGRRASTA) is disordered. H475 serves as the catalytic Proton acceptor.

The protein belongs to the GMC oxidoreductase family. Requires FAD as cofactor.

It catalyses the reaction choline + A = betaine aldehyde + AH2. The catalysed reaction is betaine aldehyde + NAD(+) + H2O = glycine betaine + NADH + 2 H(+). It functions in the pathway amine and polyamine biosynthesis; betaine biosynthesis via choline pathway; betaine aldehyde from choline (cytochrome c reductase route): step 1/1. Involved in the biosynthesis of the osmoprotectant glycine betaine. Catalyzes the oxidation of choline to betaine aldehyde and betaine aldehyde to glycine betaine at the same rate. In Pseudomonas fluorescens (strain ATCC BAA-477 / NRRL B-23932 / Pf-5), this protein is Oxygen-dependent choline dehydrogenase.